The primary structure comprises 505 residues: Cell division control protein 6 homolog B (505 aa).

Positions 37–72 (KRKMRSDSAAVSGNSVSTPKKLKSHLPSSVPNPGMS) are disordered. The segment covering 45 to 54 (AAVSGNSVST) has biased composition (polar residues).

It belongs to the CDC6/cdc18 family.

It localises to the nucleus. In terms of biological role, may be involved in the initiation of DNA replication. The sequence is that of Cell division control protein 6 homolog B from Arabidopsis thaliana (Mouse-ear cress).